Consider the following 250-residue polypeptide: tRNA (guanine-N(1)-)-methyltransferase (250 aa).

S-adenosyl-L-methionine contacts are provided by residues glycine 116 and 136–141; that span reads IGDYVL.

This sequence belongs to the RNA methyltransferase TrmD family. In terms of assembly, homodimer.

The protein resides in the cytoplasm. It catalyses the reaction guanosine(37) in tRNA + S-adenosyl-L-methionine = N(1)-methylguanosine(37) in tRNA + S-adenosyl-L-homocysteine + H(+). Functionally, specifically methylates guanosine-37 in various tRNAs. This Pseudomonas putida (strain ATCC 700007 / DSM 6899 / JCM 31910 / BCRC 17059 / LMG 24140 / F1) protein is tRNA (guanine-N(1)-)-methyltransferase.